The primary structure comprises 462 residues: Retinoic acid receptor alpha (462 aa).

The modulating stretch occupies residues 1–87 (MASNSSSCPT…PPPLPRIYKP (87 aa)). Residues 52-64 (GYSTPSPATIETQ) are compositionally biased toward polar residues. A disordered region spans residues 52–77 (GYSTPSPATIETQSSSSEEIVPSPPS). Phosphoserine; by CDK7 is present on serine 77. NR C4-type zinc fingers lie at residues 88–108 (CFVCQDKSSGYHYGVSACEGC) and 124–148 (CHRDKNCIINKVTRNRCQYCRLQKC). The nuclear receptor DNA-binding region spans 88 to 153 (CFVCQDKSSG…RLQKCFEVGM (66 aa)). A Phosphoserine; by PKB/AKT1 modification is found at serine 96. Residues 154–182 (SKESVRNDRNKKKKEVPKPECSESYTLTP) are hinge. Glycyl lysine isopeptide (Lys-Gly) (interchain with G-Cter in SUMO) cross-links involve residues lysine 166 and lysine 171. Positions 183-417 (EVGELIEKVR…PLIQEMLENS (235 aa)) constitute an NR LBD domain. At serine 219 the chain carries Phosphoserine; by PKA. An all-trans-retinoate-binding site is contributed by cysteine 235. The short motif at 254-258 (IADQI) is the UBR5-degron element. Serine 287 is an all-trans-retinoate binding site. Serine 369 is modified (phosphoserine; by PKA). Lysine 399 participates in a covalent cross-link: Glycyl lysine isopeptide (Lys-Gly) (interchain with G-Cter in SUMO). Residues 404 to 419 (GSMPPLIQEMLENSEG) form a required for binding corepressor NCOR1 region. Positions 408–416 (PLIQEMLEN) match the 9aaTAD motif. The interval 419 to 462 (GLDTLSGQPGGGGRDGGGLAPPPGSCSPSLSPSSNRSSPATHSP) is disordered. A compositionally biased stretch (gly residues) spans 426-437 (QPGGGGRDGGGL). Residues 444-462 (CSPSLSPSSNRSSPATHSP) are compositionally biased toward low complexity.

Belongs to the nuclear hormone receptor family. NR1 subfamily. Heterodimer; with RXRA (via C-terminus); association with RXRA is enhanced by pulsatile shear stress. Binds DNA preferentially as a heterodimer. RXRA serves as enhancer to induce RARA binding to RARE. Interacts with RXRG. Interacts with coactivators NCOA3 and NCOA6. Interacts with NCOA7; the interaction requires ligand-binding. Interacts (via the ligand-binding domain) with PRAME; the interaction is ligand (retinoic acid)-dependent. Interacts with AKT1; the interaction phosphorylates RARA and represses transactivation. Interacts with PRKAR1A; the interaction negatively regulates RARA transcriptional activity. Interacts with NCOR1 and NCOR2. Interacts with PRMT2. Interacts with LRIF1. Interacts with ASXL1 and NCOA1. Interacts with ACTN4. In a complex with HDAC3, HDAC5 and HDAC7; the HDACs serve as corepressors of RARA, causing its deacetylation and inhibition of RARE DNA element binding; association with HDAC3, HDAC5 and HDAC7 is increased upon oscillatory shear stress. Interacts with CDK7. In the absence of hormonal ligand, interacts with TACC1. In terms of processing, phosphorylated on serine and threonine residues. Phosphorylation does not change during cell cycle. Phosphorylation on Ser-77 is crucial for transcriptional activity. Phosphorylation by AKT1 is required for the repressor activity but has no effect on DNA binding, protein stability nor subcellular localization. Phosphorylated by PKA in vitro. This phosphorylation on Ser-219 and Ser-369 is critical for ligand binding, nuclear localization and transcriptional activity in response to FSH signaling. Post-translationally, sumoylated with SUMO2, mainly on Lys-399 which is also required for SENP6 binding. On all-trans retinoic acid (ATRA) binding, a conformational change may occur that allows sumoylation on two additional site, Lys-166 and Lys-171. Probably desumoylated by SENP6. Sumoylation levels determine nuclear localization and regulate ATRA-mediated transcriptional activity. Trimethylation enhances heterodimerization with RXRA and positively modulates the transcriptional activation. In terms of processing, ubiquitinated by UBR5, leading to its degradation: UBR5 specifically recognizes and binds ligand-bound RARA when it is not associated with coactivators (NCOAs). In presence of NCOAs, the UBR5-degron is not accessible, preventing its ubiquitination and degradation. Post-translationally, acetylated; acetylation is increased upon pulsatile shear stress and decreased upon oscillatory shear stress. As to expression, expressed in monocytes.

It localises to the nucleus. Its subcellular location is the cytoplasm. Functionally, receptor for retinoic acid. Retinoic acid receptors bind as heterodimers to their target response elements in response to their ligands, all-trans or 9-cis retinoic acid, and regulate gene expression in various biological processes. The RXR/RAR heterodimers bind to the retinoic acid response elements (RARE) composed of tandem 5'-AGGTCA-3' sites known as DR1-DR5. In the absence of ligand, the RXR-RAR heterodimers associate with a multiprotein complex containing transcription corepressors that induce histone deacetylation, chromatin condensation and transcriptional suppression. On ligand binding, the corepressors dissociate from the receptors and associate with the coactivators leading to transcriptional activation. Formation of a complex with histone deacetylases might lead to inhibition of RARE DNA element binding and to transcriptional repression. Transcriptional activation and RARE DNA element binding might be supported by the transcription factor KLF2. RARA plays an essential role in the regulation of retinoic acid-induced germ cell development during spermatogenesis. Has a role in the survival of early spermatocytes at the beginning prophase of meiosis. In Sertoli cells, may promote the survival and development of early meiotic prophase spermatocytes. In concert with RARG, required for skeletal growth, matrix homeostasis and growth plate function. Together with RXRA, positively regulates microRNA-10a expression, thereby inhibiting the GATA6/VCAM1 signaling response to pulsatile shear stress in vascular endothelial cells. In association with HDAC3, HDAC5 and HDAC7 corepressors, plays a role in the repression of microRNA-10a and thereby promotes the inflammatory response. This Homo sapiens (Human) protein is Retinoic acid receptor alpha (RARA).